Here is a 79-residue protein sequence, read N- to C-terminus: uncharacterized protein (79 aa).

The disordered stretch occupies residues 51-79 (PAQFPKVQRPPTLLGGKNTSTQTTLHPVI). Positions 67 to 79 (KNTSTQTTLHPVI) are enriched in polar residues.

This is an uncharacterized protein from Homo sapiens (Human).